Here is a 228-residue protein sequence, read N- to C-terminus: Tungstate uptake system permease protein TupB (228 aa).

The next 5 membrane-spanning stretches (helical) occupy residues 25 to 45, 65 to 85, 102 to 122, 144 to 164, and 203 to 223; these read IIFL…AVSI, VLYS…AIGL, AMII…TYSL, VIIL…VTTF, and MAIA…AVIY. Residues 26 to 222 enclose the ABC transmembrane type-1 domain; it reads IFLSVFVSST…MISFAINAVI (197 aa).

The protein belongs to the binding-protein-dependent transport system permease family. In terms of assembly, the complex is composed of two ATP-binding proteins (TupC), two transmembrane proteins (TupB) and a solute-binding protein (TupA).

Its subcellular location is the cell membrane. Part of an ABC transporter complex involved in tungstate uptake. Probably responsible for the translocation of the substrate across the membrane. This is Tungstate uptake system permease protein TupB from Peptoclostridium acidaminophilum (Eubacterium acidaminophilum).